The sequence spans 422 residues: MFYDRAKIYVKGGDGGNGCIAMRREKYVPFGGPWGGDGGHGGDVTFIADEGLNTLQDFRYKKHFKAERGGHGMGKNMNGPAGEDLLVKVPTGTVVREAETGRLIADLLENGQQVVIAKGGRGGRGNVHFASSSNKAPRIAEKGEPGEELWLELELKVIADVGLIGFPNAGKSTFISMVSAAKPKIADYPFTTLVPNLGVVSAGEEGSFVLADIPGLVEGASQGVGLGHEFLRHTERTRLLIHVVDTAGTEGRDPVEDIKIINRELELYDPRLSTRPQIIAANKMDIIPLAEENLARLREEFGEQFEIYPISAATNQGLDKVIHRVAELLAQLPKIEPEQPEEDVMFEPEERFNIKRDIDGNWRVTGKEIERHVAMTYLEEDQSLERLQRIMKMMGLENGLVEAGVKVGDIVRIGDWEFEWSE.

The 158-residue stretch at 1–158 folds into the Obg domain; that stretch reads MFYDRAKIYV…LWLELELKVI (158 aa). An OBG-type G domain is found at 159 to 330; sequence ADVGLIGFPN…VIHRVAELLA (172 aa). Residues 165–172, 190–194, 212–215, 282–285, and 311–313 contribute to the GTP site; these read GFPNAGKS, FTTLV, DIPG, NKMD, and SAA. Positions 172 and 192 each coordinate Mg(2+). Residues 344–422 enclose the OCT domain; sequence VMFEPEERFN…IGDWEFEWSE (79 aa).

Belongs to the TRAFAC class OBG-HflX-like GTPase superfamily. OBG GTPase family. As to quaternary structure, monomer. It depends on Mg(2+) as a cofactor.

Its subcellular location is the cytoplasm. In terms of biological role, an essential GTPase which binds GTP, GDP and possibly (p)ppGpp with moderate affinity, with high nucleotide exchange rates and a fairly low GTP hydrolysis rate. Plays a role in control of the cell cycle, stress response, ribosome biogenesis and in those bacteria that undergo differentiation, in morphogenesis control. This is GTPase Obg from Desulforamulus reducens (strain ATCC BAA-1160 / DSM 100696 / MI-1) (Desulfotomaculum reducens).